Reading from the N-terminus, the 504-residue chain is UDP-N-acetylmuramoylalanine--D-glutamate ligase (504 aa).

An ATP-binding site is contributed by 132-138 (GTNGKTT). Basic and acidic residues predominate over residues 286–295 (DRDASDEPAP). A disordered region spans residues 286 to 305 (DRDASDEPAPKRRRKNEVAT).

This sequence belongs to the MurCDEF family.

It localises to the cytoplasm. The enzyme catalyses UDP-N-acetyl-alpha-D-muramoyl-L-alanine + D-glutamate + ATP = UDP-N-acetyl-alpha-D-muramoyl-L-alanyl-D-glutamate + ADP + phosphate + H(+). It participates in cell wall biogenesis; peptidoglycan biosynthesis. In terms of biological role, cell wall formation. Catalyzes the addition of glutamate to the nucleotide precursor UDP-N-acetylmuramoyl-L-alanine (UMA). The chain is UDP-N-acetylmuramoylalanine--D-glutamate ligase from Paraburkholderia xenovorans (strain LB400).